The primary structure comprises 686 residues: Pentatricopeptide repeat-containing protein 1, mitochondrial (686 aa).

Residues 55–67 show a composition bias toward polar residues; sequence RMSSLCSDSSTPV. Residues 55 to 79 are disordered; sequence RMSSLCSDSSTPVAPQEEEEEESFG. 5 PPR repeats span residues 124–160, 161–195, 196–234, 235–269, and 270–306; these read TPYW…RLQP, LECN…DLEP, SDAT…NFQL, NLKT…GHAV, and TEET…GIKP. Positions 383 to 407 are disordered; sequence KLEGPPAFPEARETSRTQPEVETKA. Residues 392–407 are compositionally biased toward basic and acidic residues; that stretch reads EARETSRTQPEVETKA. 2 PPR repeats span residues 508–542 and 575–609; these read DITF…GIVP and NTHI…SVPV.

The protein belongs to the PTCD1 family. As to quaternary structure, associates with mitochondrial leucine tRNAs. Interacts with ELAC2.

It is found in the mitochondrion matrix. Its function is as follows. Mitochondrial protein implicated in negative regulation of leucine tRNA levels, as well as negative regulation of mitochondria-encoded proteins and COX activity. Also affects the 3'-processing of mitochondrial tRNAs. The sequence is that of Pentatricopeptide repeat-containing protein 1, mitochondrial (Ptcd1) from Rattus norvegicus (Rat).